Reading from the N-terminus, the 352-residue chain is Ion-translocating oxidoreductase complex subunit D (352 aa).

The next 5 helical transmembrane spans lie at 20–40 (IMLL…WFFG), 42–62 (GTLV…ALVL), 78–109 (ALLT…VIIA), 123–143 (PAMI…TSWL), and 148–168 (IAVN…GHTA). Thr-187 carries the FMN phosphoryl threonine modification. 5 helical membrane-spanning segments follow: residues 214–234 (ILAG…GVWL), 242–262 (WHIP…GWLF), 267–287 (LAAP…FFIL), 301–321 (LIFG…GGYP), and 322–342 (DGVA…DYYT).

Belongs to the NqrB/RnfD family. As to quaternary structure, the complex is composed of six subunits: RsxA, RsxB, RsxC, RsxD, RsxE and RsxG. Requires FMN as cofactor.

It is found in the cell inner membrane. Part of a membrane-bound complex that couples electron transfer with translocation of ions across the membrane. Required to maintain the reduced state of SoxR. The chain is Ion-translocating oxidoreductase complex subunit D from Shigella dysenteriae serotype 1 (strain Sd197).